The primary structure comprises 326 residues: Pectate lyase plyB (326 aa).

An N-terminal signal peptide occupies residues 1 to 15 (MRFTPLFLLAAVAIA). Residues Asp-133, Asp-162, and Asp-166 each contribute to the Ca(2+) site. Arg-219 is a catalytic residue.

It belongs to the polysaccharide lyase 1 family. Requires Ca(2+) as cofactor.

Its subcellular location is the secreted. The catalysed reaction is Eliminative cleavage of (1-&gt;4)-alpha-D-galacturonan to give oligosaccharides with 4-deoxy-alpha-D-galact-4-enuronosyl groups at their non-reducing ends.. It participates in glycan metabolism; pectin degradation; 2-dehydro-3-deoxy-D-gluconate from pectin: step 2/5. Pectinolytic enzyme consist of four classes of enzymes: pectin lyase, polygalacturonase, pectin methylesterase and rhamnogalacturonase. Among pectinolytic enzymes, pectin lyase is the most important in depolymerization of pectin, since it cleaves internal glycosidic bonds of highly methylated pectins. The protein is Pectate lyase plyB (plyB) of Emericella nidulans (strain FGSC A4 / ATCC 38163 / CBS 112.46 / NRRL 194 / M139) (Aspergillus nidulans).